A 379-amino-acid chain; its full sequence is Flagellin A (379 aa).

Coiled-coil stretches lie at residues 103–128 (TNSA…RIAE) and 302–341 (YVDS…IKDT).

The protein belongs to the bacterial flagellin family. In terms of assembly, heteromer of multiple flagellin subunits including FlaA, FlaB, FlaC, FlaD and possibly FlaE.

The protein resides in the secreted. It localises to the bacterial flagellum. In terms of biological role, flagellin is the subunit protein which polymerizes to form the filaments of bacterial flagella. FlaA is essential for flagellar synthesis and full motility. Important for virulence at two different levels: is needed for crossing the fish integument and may play a role once the bacterium has entered the host. This chain is Flagellin A (flaA), found in Vibrio anguillarum (Listonella anguillarum).